The sequence spans 375 residues: Platelet-derived growth factor receptor-like protein (375 aa).

The signal sequence occupies residues 1–21 (MKFWLLLGLLLLHEALEDVAG). The disordered stretch occupies residues 20–63 (AGQHSPKNKRPKEQGENRIKPTNKKAKPKIPKVKDRDSTDSTAK). Residues 40 to 50 (PTNKKAKPKIP) show a composition bias toward basic residues. The Ig-like C2-type 1 domain maps to 47 to 159 (PKIPKVKDRD…GYICRRDEAK (113 aa)). Cys96 and Cys143 form a disulfide bridge. The N-linked (GlcNAc...) asparagine glycan is linked to Asn219. One can recognise an Ig-like C2-type 2 domain in the interval 272–375 (PSTTILASSN…TTVATTVEFS (104 aa)). Cys293 and Cys357 are joined by a disulfide.

As to quaternary structure, forms a complex composed of PDGFRL, TNK2 and GRB2.

The protein localises to the secreted. The chain is Platelet-derived growth factor receptor-like protein (Pdgfrl) from Mus musculus (Mouse).